The sequence spans 473 residues: 3-isopropylmalate dehydratase large subunit (473 aa).

Residues Cys348, Cys408, and Cys411 each contribute to the [4Fe-4S] cluster site. Residues 421–440 (GDEASASSSNRNFIGRQGSK) form a disordered region.

The protein belongs to the aconitase/IPM isomerase family. LeuC type 1 subfamily. As to quaternary structure, heterodimer of LeuC and LeuD. Requires [4Fe-4S] cluster as cofactor.

It catalyses the reaction (2R,3S)-3-isopropylmalate = (2S)-2-isopropylmalate. Its pathway is amino-acid biosynthesis; L-leucine biosynthesis; L-leucine from 3-methyl-2-oxobutanoate: step 2/4. In terms of biological role, catalyzes the isomerization between 2-isopropylmalate and 3-isopropylmalate, via the formation of 2-isopropylmaleate. In Haloferax volcanii (strain ATCC 29605 / DSM 3757 / JCM 8879 / NBRC 14742 / NCIMB 2012 / VKM B-1768 / DS2) (Halobacterium volcanii), this protein is 3-isopropylmalate dehydratase large subunit.